Consider the following 176-residue polypeptide: Tubulin polymerization-promoting protein family member 3 (176 aa).

Alanine 2 is subject to N-acetylalanine. Residues 132–152 (TGSHKERFDESGKGKGIAGRQ) are disordered. Basic and acidic residues predominate over residues 134-144 (SHKERFDESGK).

Belongs to the TPPP family.

It is found in the cytoplasm. The protein resides in the cytoskeleton. Functionally, regulator of microtubule dynamic that has microtubule bundling activity. Required for embryo implantation; possibly by regulating beta-catenin. Also required for decidualization via regulation of beta-catenin. The chain is Tubulin polymerization-promoting protein family member 3 from Mus musculus (Mouse).